We begin with the raw amino-acid sequence, 282 residues long: Shikimate dehydrogenase (NADP(+)) (282 aa).

Shikimate contacts are provided by residues 15–17 (SKS) and threonine 62. Lysine 66 serves as the catalytic Proton acceptor. Residues asparagine 87 and aspartate 103 each contribute to the shikimate site. Residues 127–131 (GAGGA), 151–156 (NRTHTK), and methionine 220 contribute to the NADP(+) site. Tyrosine 222 serves as a coordination point for shikimate. An NADP(+)-binding site is contributed by glycine 244.

Belongs to the shikimate dehydrogenase family. Homodimer.

It carries out the reaction shikimate + NADP(+) = 3-dehydroshikimate + NADPH + H(+). It participates in metabolic intermediate biosynthesis; chorismate biosynthesis; chorismate from D-erythrose 4-phosphate and phosphoenolpyruvate: step 4/7. In terms of biological role, involved in the biosynthesis of the chorismate, which leads to the biosynthesis of aromatic amino acids. Catalyzes the reversible NADPH linked reduction of 3-dehydroshikimate (DHSA) to yield shikimate (SA). The chain is Shikimate dehydrogenase (NADP(+)) from Shewanella putrefaciens (strain CN-32 / ATCC BAA-453).